Reading from the N-terminus, the 190-residue chain is Nucleoside triphosphate pyrophosphatase (190 aa).

Aspartate 69 functions as the Proton acceptor in the catalytic mechanism.

The protein belongs to the Maf family. Requires a divalent metal cation as cofactor.

It localises to the cytoplasm. The enzyme catalyses a ribonucleoside 5'-triphosphate + H2O = a ribonucleoside 5'-phosphate + diphosphate + H(+). It carries out the reaction a 2'-deoxyribonucleoside 5'-triphosphate + H2O = a 2'-deoxyribonucleoside 5'-phosphate + diphosphate + H(+). In terms of biological role, nucleoside triphosphate pyrophosphatase. May have a dual role in cell division arrest and in preventing the incorporation of modified nucleotides into cellular nucleic acids. The chain is Nucleoside triphosphate pyrophosphatase from Helicobacter pylori (strain G27).